The following is an 88-amino-acid chain: Large ribosomal subunit protein bL27 (88 aa).

The protein belongs to the bacterial ribosomal protein bL27 family.

This Carboxydothermus hydrogenoformans (strain ATCC BAA-161 / DSM 6008 / Z-2901) protein is Large ribosomal subunit protein bL27.